Reading from the N-terminus, the 255-residue chain is Homeobox-leucine zipper protein ATHB-23 (255 aa).

A DNA-binding region (homeobox) is located at residues 68-127; that stretch reads MGEKKRRLNMEQLKALEKDFELGNKLESDRKLELARALGLQPRQIAIWFQNRRARSKTKQ. The interval 128–163 is leucine-zipper; that stretch reads LEKDYDMLKRQFESLRDENEVLQTQNQKLQAQVMAL.

The protein belongs to the HD-ZIP homeobox family. Class I subfamily. Expressed in young leaves, in the adaxial domain of leaf primordia and the rib meristem. Expressed in the styles of flowers and siliques.

It is found in the nucleus. Probable transcription factor. The protein is Homeobox-leucine zipper protein ATHB-23 (ATHB-23) of Arabidopsis thaliana (Mouse-ear cress).